The primary structure comprises 381 residues: 1-deoxy-D-xylulose 5-phosphate reductoisomerase (381 aa).

7 residues coordinate NADPH: threonine 11, glycine 12, serine 13, isoleucine 14, lysine 36, asparagine 37, and asparagine 121. Lysine 122 serves as a coordination point for 1-deoxy-D-xylulose 5-phosphate. Residue glutamate 123 coordinates NADPH. Aspartate 147 is a Mn(2+) binding site. The 1-deoxy-D-xylulose 5-phosphate site is built by serine 148, glutamate 149, serine 173, and histidine 196. Residue glutamate 149 participates in Mn(2+) binding. Glycine 202 contributes to the NADPH binding site. Residues serine 209, asparagine 214, lysine 215, and glutamate 218 each coordinate 1-deoxy-D-xylulose 5-phosphate. Position 218 (glutamate 218) interacts with Mn(2+).

Belongs to the DXR family. It depends on Mg(2+) as a cofactor. Mn(2+) is required as a cofactor.

It catalyses the reaction 2-C-methyl-D-erythritol 4-phosphate + NADP(+) = 1-deoxy-D-xylulose 5-phosphate + NADPH + H(+). The protein operates within isoprenoid biosynthesis; isopentenyl diphosphate biosynthesis via DXP pathway; isopentenyl diphosphate from 1-deoxy-D-xylulose 5-phosphate: step 1/6. Functionally, catalyzes the NADPH-dependent rearrangement and reduction of 1-deoxy-D-xylulose-5-phosphate (DXP) to 2-C-methyl-D-erythritol 4-phosphate (MEP). This is 1-deoxy-D-xylulose 5-phosphate reductoisomerase from Acetivibrio thermocellus (strain ATCC 27405 / DSM 1237 / JCM 9322 / NBRC 103400 / NCIMB 10682 / NRRL B-4536 / VPI 7372) (Clostridium thermocellum).